The following is a 299-amino-acid chain: MRQIAFYGKGGIGKSTTSQNTLAGMAQNGNRIMIVGCDPKADSTRLILNTKAQVTVLHLAAERGAVEDLELEDVLLQGFADIKCVESGGPEPGVGCAGRGIITAINFLEEEGAYEDLDFVSYDVLGDVVCGGFAMPIREGKAQEIYIVTSGEMMAMYAANNIARGILKYAHTGGVRLGGLICNSRNVNRETDLIEELADRLNTQMIHFVPRSKQVQEAELRRMTVIQYSPDHPQADEYRTLAKKIEENTKLTIPTPIDNDTLEELLINYGLLGSEEEYKKVMEADMATQALTRATSINK.

8–15 (GKGGIGKS) is a binding site for ATP. C96 provides a ligand contact to [4Fe-4S] cluster. R99 carries the post-translational modification ADP-ribosylarginine; by dinitrogenase reductase ADP-ribosyltransferase. C130 is a [4Fe-4S] cluster binding site.

This sequence belongs to the NifH/BchL/ChlL family. Homodimer. [4Fe-4S] cluster is required as a cofactor. The reversible ADP-ribosylation of Arg-99 inactivates the nitrogenase reductase and regulates nitrogenase activity.

The catalysed reaction is N2 + 8 reduced [2Fe-2S]-[ferredoxin] + 16 ATP + 16 H2O = H2 + 8 oxidized [2Fe-2S]-[ferredoxin] + 2 NH4(+) + 16 ADP + 16 phosphate + 6 H(+). Functionally, the key enzymatic reactions in nitrogen fixation are catalyzed by the nitrogenase complex, which has 2 components: the iron protein and the molybdenum-iron protein. This is Nitrogenase iron protein from Gloeothece citriformis (strain PCC 7424) (Cyanothece sp. (strain PCC 7424)).